Reading from the N-terminus, the 501-residue chain is Serine/threonine-protein kinase pelle (501 aa).

Residues methionine 1–arginine 25 form a disordered region. Residues alanine 7–asparagine 18 are compositionally biased toward low complexity. The 67-residue stretch at tryptophan 55 to valine 121 folds into the Death domain. A disordered region spans residues aspartate 144–glutamate 176. Low complexity predominate over residues valine 149–asparagine 167. Residues tryptophan 213–valine 499 enclose the Protein kinase domain. ATP-binding positions include leucine 219–valine 227 and lysine 240. Residue aspartate 346 is the Proton acceptor of the active site. Residues lysine 348–asparagine 351 and aspartate 364 each bind ATP.

Belongs to the protein kinase superfamily. TKL Ser/Thr protein kinase family. Pelle subfamily. As to quaternary structure, interacts (via Death domain) with tub (via Death domain). Interacts with Pellino (Pli).

It localises to the cell membrane. Its subcellular location is the cytoplasm. The catalysed reaction is L-seryl-[protein] + ATP = O-phospho-L-seryl-[protein] + ADP + H(+). The enzyme catalyses L-threonyl-[protein] + ATP = O-phospho-L-threonyl-[protein] + ADP + H(+). Its function is as follows. Plays an essential role in the Tl receptor signaling pathway that establishes embryonic dorsoventral polarity; the signal directs import of dl into ventral and ventrolateral nuclei, thereby establishing dorsoventral polarity. Tub recruits pll to the plasma membrane and protein-protein interaction activates pll. The polypeptide is Serine/threonine-protein kinase pelle (pll) (Drosophila melanogaster (Fruit fly)).